Here is a 124-residue protein sequence, read N- to C-terminus: MPTIQQLIRTERQRLTRKTKSPALRSCPERRGVCTRVYTSTPKKPNSALRKVARVRLTSGFEVTAYIPGIGHNLQEHSVVLLRGGRVKDLPGVRYHIIRGTLDTAGVKDRRQARSKYGAKAPKS.

Asp89 bears the 3-methylthioaspartic acid mark.

The protein belongs to the universal ribosomal protein uS12 family. In terms of assembly, part of the 30S ribosomal subunit. Contacts proteins S8 and S17. May interact with IF1 in the 30S initiation complex.

Functionally, with S4 and S5 plays an important role in translational accuracy. In terms of biological role, interacts with and stabilizes bases of the 16S rRNA that are involved in tRNA selection in the A site and with the mRNA backbone. Located at the interface of the 30S and 50S subunits, it traverses the body of the 30S subunit contacting proteins on the other side and probably holding the rRNA structure together. The combined cluster of proteins S8, S12 and S17 appears to hold together the shoulder and platform of the 30S subunit. The polypeptide is Small ribosomal subunit protein uS12 (Prochlorococcus marinus (strain SARG / CCMP1375 / SS120)).